A 159-amino-acid polypeptide reads, in one-letter code: Transcriptional repressor NrdR (159 aa).

Residues 1–22 are disordered; it reads MRCPFCGSEDTQVKDSRPAEDN. A zinc finger lies at 3–34; that stretch reads CPFCGSEDTQVKDSRPAEDNTSIRRRRICPDC. Residues 11–22 show a composition bias toward basic and acidic residues; it reads TQVKDSRPAEDN. The ATP-cone domain maps to 49–139; the sequence is LMVIKKSGRK…VYRDFSHAED (91 aa).

The protein belongs to the NrdR family. Zn(2+) serves as cofactor.

Functionally, negatively regulates transcription of bacterial ribonucleotide reductase nrd genes and operons by binding to NrdR-boxes. The sequence is that of Transcriptional repressor NrdR from Agrobacterium fabrum (strain C58 / ATCC 33970) (Agrobacterium tumefaciens (strain C58)).